Here is a 358-residue protein sequence, read N- to C-terminus: Alanine racemase (358 aa).

The active-site Proton acceptor; specific for D-alanine is the lysine 34. Lysine 34 is subject to N6-(pyridoxal phosphate)lysine. Position 129 (arginine 129) interacts with substrate. The Proton acceptor; specific for L-alanine role is filled by tyrosine 254. A substrate-binding site is contributed by methionine 302.

The protein belongs to the alanine racemase family. It depends on pyridoxal 5'-phosphate as a cofactor.

It carries out the reaction L-alanine = D-alanine. Its pathway is amino-acid biosynthesis; D-alanine biosynthesis; D-alanine from L-alanine: step 1/1. Its function is as follows. Catalyzes the interconversion of L-alanine and D-alanine. May also act on other amino acids. This chain is Alanine racemase (alr), found in Hamiltonella defensa subsp. Acyrthosiphon pisum (strain 5AT).